A 351-amino-acid chain; its full sequence is Ubiquinol oxidase 4, chloroplastic/chromoplastic (351 aa).

A chloroplast and chromoplast-targeting transit peptide spans 1-56; the sequence is MAAISGISSGTLTISRPLVTLRRSRAAVSYSSSHRLLHHLPLSSRRLLLRNNHRVQ. The tract at residues 71–91 is disordered; the sequence is ESFKAETSTGTEPLEEPNMSS. The chain crosses the membrane as a helical span at residues 132-152; it reads FFVLETIARVPYFAFMSVLHM. Positions 136, 175, and 178 each coordinate Fe cation. The chain crosses the membrane as a helical span at residues 195-215; it reads FLAQHIATFYYFMTVFLYILS. Residues Glu227, Glu296, and His299 each contribute to the Fe cation site.

The protein belongs to the alternative oxidase family. Requires Fe cation as cofactor. Ubiquitous.

The protein resides in the plastid. It localises to the chloroplast thylakoid membrane. Its subcellular location is the chromoplast membrane. It catalyses the reaction 2 a ubiquinol + O2 = 2 a ubiquinone + 2 H2O. In terms of biological role, acts early in chloroplast biogenesis as a component of a redox chain responsible for phytoene desaturation. Prevents the generation of toxic oxygen radicals and photooxidation of the nascent photosynthetic apparatus. Involved in the differentiation of multiple plastid types, including chloroplasts, amyloplasts, and etioplasts. Might participate in the chloroplast respiratory chain. The chain is Ubiquinol oxidase 4, chloroplastic/chromoplastic (AOX4) from Arabidopsis thaliana (Mouse-ear cress).